A 452-amino-acid chain; its full sequence is Trigger factor (452 aa).

A PPIase FKBP-type domain is found at 171 to 256 (GDRVTLAFKG…ATLIEAPQDA (86 aa)).

It belongs to the FKBP-type PPIase family. Tig subfamily.

The protein resides in the cytoplasm. The enzyme catalyses [protein]-peptidylproline (omega=180) = [protein]-peptidylproline (omega=0). Its function is as follows. Involved in protein export. Acts as a chaperone by maintaining the newly synthesized protein in an open conformation. Functions as a peptidyl-prolyl cis-trans isomerase. In Afipia carboxidovorans (strain ATCC 49405 / DSM 1227 / KCTC 32145 / OM5) (Oligotropha carboxidovorans), this protein is Trigger factor.